The following is a 326-amino-acid chain: L-Ala--D-Glu endopeptidase (326 aa).

A signal peptide spans 1–19 (MKVLLSALLLLLFAFEPSA). Zn(2+)-binding residues include His204, Asp208, His292, and His294.

Belongs to the peptidase M23B family. The cofactor is Zn(2+).

Functionally, L-Ala--D-Glu endopeptidase involved in production of single L-alanine side chains from tetrapeptides in the spore cortex peptidoglycan. Therefore, is required for the endospore cortex maturation. The sequence is that of L-Ala--D-Glu endopeptidase (lytH) from Bacillus subtilis (strain 168).